Here is a 917-residue protein sequence, read N- to C-terminus: Probable dipeptidyl-aminopeptidase B (917 aa).

The interval 1-75 is disordered; the sequence is MTVGRRLNDE…KYRDDVEEDW (75 aa). The Cytoplasmic portion of the chain corresponds to 1–93; sequence MTVGRRLNDE…NAKPSQRRTQ (93 aa). A compositionally biased stretch (low complexity) spans 27-39; it reads DSSSTASVSLTLV. Over residues 40-49 the composition is skewed to polar residues; that stretch reads DGTNHTTAKP. The segment covering 57 to 69 has biased composition (basic and acidic residues); the sequence is VSRDRYADEKYRD. The chain crosses the membrane as a helical; Signal-anchor for type II membrane protein span at residues 94-114; it reads IVFWLLVALCVGGWAVAFLFF. Topologically, residues 115–917 are vacuolar; that stretch reads VTSPGNTIST…KRVIRRLLHR (803 aa). Over residues 124–133 the composition is skewed to polar residues; sequence TTPDTGSGSP. A disordered region spans residues 124–150; that stretch reads TTPDTGSGSPDSDVIKPGSPPAGKKIP. N-linked (GlcNAc...) asparagine glycans are attached at residues Asn-206, Asn-302, and Asn-354. Catalysis depends on Ser-759, which acts as the Charge relay system. Residue Asn-818 is glycosylated (N-linked (GlcNAc...) asparagine). Residues Asp-836 and His-869 each act as charge relay system in the active site.

The protein belongs to the peptidase S9B family.

It is found in the vacuole membrane. It catalyses the reaction Release of an N-terminal dipeptide, Xaa-Yaa-|-Zaa-, from a polypeptide, preferentially when Yaa is Pro, provided Zaa is neither Pro nor hydroxyproline.. Its function is as follows. Type IV dipeptidyl-peptidase which removes N-terminal dipeptides sequentially from polypeptides having unsubstituted N-termini provided that the penultimate residue is proline. The sequence is that of Probable dipeptidyl-aminopeptidase B (DAPB) from Arthroderma gypseum (strain ATCC MYA-4604 / CBS 118893) (Microsporum gypseum).